We begin with the raw amino-acid sequence, 675 residues long: UvrABC system protein B (675 aa).

Residues 32 to 417 (EGLSDGLAYQ…EHAGQVVEQV (386 aa)) enclose the Helicase ATP-binding domain. 45-52 (GVTGSGKT) contributes to the ATP binding site. Positions 98-121 (YYDYYQPEAYVPSRDLFIEKDSAI) match the Beta-hairpin motif. The Helicase C-terminal domain occupies 436 to 602 (QVDDLMSEIN…QIKKQVKDII (167 aa)). Positions 634-669 (IKEIAKLEKAMQQAARDLQFEEAAVLRDRIRNIKEN) constitute a UVR domain.

It belongs to the UvrB family. Forms a heterotetramer with UvrA during the search for lesions. Interacts with UvrC in an incision complex.

The protein resides in the cytoplasm. Its function is as follows. The UvrABC repair system catalyzes the recognition and processing of DNA lesions. A damage recognition complex composed of 2 UvrA and 2 UvrB subunits scans DNA for abnormalities. Upon binding of the UvrA(2)B(2) complex to a putative damaged site, the DNA wraps around one UvrB monomer. DNA wrap is dependent on ATP binding by UvrB and probably causes local melting of the DNA helix, facilitating insertion of UvrB beta-hairpin between the DNA strands. Then UvrB probes one DNA strand for the presence of a lesion. If a lesion is found the UvrA subunits dissociate and the UvrB-DNA preincision complex is formed. This complex is subsequently bound by UvrC and the second UvrB is released. If no lesion is found, the DNA wraps around the other UvrB subunit that will check the other stand for damage. This is UvrABC system protein B from Neisseria meningitidis serogroup A / serotype 4A (strain DSM 15465 / Z2491).